Here is a 483-residue protein sequence, read N- to C-terminus: Protein nucleotidyltransferase YdiU (483 aa).

ATP-binding residues include Gly81, Gly83, Arg84, Lys103, Asp115, Gly116, Arg166, and Arg173. Asp244 acts as the Proton acceptor in catalysis. Residues Asn245 and Asp254 each coordinate Mg(2+). Asp254 provides a ligand contact to ATP.

The protein belongs to the SELO family. The cofactor is Mg(2+). It depends on Mn(2+) as a cofactor.

It carries out the reaction L-seryl-[protein] + ATP = 3-O-(5'-adenylyl)-L-seryl-[protein] + diphosphate. The catalysed reaction is L-threonyl-[protein] + ATP = 3-O-(5'-adenylyl)-L-threonyl-[protein] + diphosphate. It catalyses the reaction L-tyrosyl-[protein] + ATP = O-(5'-adenylyl)-L-tyrosyl-[protein] + diphosphate. The enzyme catalyses L-histidyl-[protein] + UTP = N(tele)-(5'-uridylyl)-L-histidyl-[protein] + diphosphate. It carries out the reaction L-seryl-[protein] + UTP = O-(5'-uridylyl)-L-seryl-[protein] + diphosphate. The catalysed reaction is L-tyrosyl-[protein] + UTP = O-(5'-uridylyl)-L-tyrosyl-[protein] + diphosphate. In terms of biological role, nucleotidyltransferase involved in the post-translational modification of proteins. It can catalyze the addition of adenosine monophosphate (AMP) or uridine monophosphate (UMP) to a protein, resulting in modifications known as AMPylation and UMPylation. This is Protein nucleotidyltransferase YdiU from Shewanella halifaxensis (strain HAW-EB4).